Consider the following 83-residue polypeptide: Large ribosomal subunit protein bL31 (83 aa).

It belongs to the bacterial ribosomal protein bL31 family. Type A subfamily. Part of the 50S ribosomal subunit.

Binds the 23S rRNA. The polypeptide is Large ribosomal subunit protein bL31 (Gloeothece citriformis (strain PCC 7424) (Cyanothece sp. (strain PCC 7424))).